The sequence spans 136 residues: D-ribose pyranase (136 aa).

The active-site Proton donor is H20. Residues D28, H98, and 120 to 122 (YAN) each bind substrate.

Belongs to the RbsD / FucU family. RbsD subfamily. Homodecamer.

Its subcellular location is the cytoplasm. The catalysed reaction is beta-D-ribopyranose = beta-D-ribofuranose. It participates in carbohydrate metabolism; D-ribose degradation; D-ribose 5-phosphate from beta-D-ribopyranose: step 1/2. Functionally, catalyzes the interconversion of beta-pyran and beta-furan forms of D-ribose. In Geobacillus kaustophilus (strain HTA426), this protein is D-ribose pyranase.